We begin with the raw amino-acid sequence, 605 residues long: Heparan-sulfate 6-O-sulfotransferase 2 (605 aa).

Residues 1-4 (MALP) are Cytoplasmic-facing. A disordered region spans residues 1–66 (MALPACAVRE…GVSHGFHTRP (66 aa)). Residues 5 to 27 (ACAVREFEPPRQPERGAPVRTTC) form a helical; Signal-anchor for type II membrane protein membrane-spanning segment. Basic and acidic residues predominate over residues 9-18 (REFEPPRQPE). The Lumenal portion of the chain corresponds to 28–605 (PRRHSRVEAE…DYIGSVEKWR (578 aa)). N-linked (GlcNAc...) asparagine glycosylation occurs at N209. 233 to 241 (HIQKTGGTT) provides a ligand contact to 3'-phosphoadenylyl sulfate. Residues 263–264 (KK), R280, W285, and H290 contribute to the substrate site. H290 acts as the Proton acceptor in catalysis. 3'-phosphoadenylyl sulfate contacts are provided by R325 and S333. 2 residues coordinate substrate: H337 and W344. A glycan (N-linked (GlcNAc...) asparagine) is linked at N404. Position 457 to 459 (457 to 459 (TQY)) interacts with 3'-phosphoadenylyl sulfate. N-linked (GlcNAc...) asparagine glycosylation occurs at N460. 3'-phosphoadenylyl sulfate is bound at residue 463 to 464 (RA). Residues 530–605 (FQSQGQGQSQ…DYIGSVEKWR (76 aa)) form a disordered region. The span at 531–571 (QSQGQGQSQNPNQNQSQNPNPNANQNLTQNLMQNLTQSLSQ) shows a compositional bias: low complexity. N544, N556, N564, N589, and N592 each carry an N-linked (GlcNAc...) asparagine glycan. Positions 579–597 (KQNSGKEQNDNTSNGTNDY) are enriched in polar residues.

It belongs to the sulfotransferase 6 family.

It localises to the membrane. It carries out the reaction alpha-D-glucosaminyl-[heparan sulfate](n) + 3'-phosphoadenylyl sulfate = 6-sulfo-alpha-D-glucosaminyl-[heparan sulfate](n) + adenosine 3',5'-bisphosphate + H(+). In terms of biological role, 6-O-sulfation enzyme which catalyzes the transfer of sulfate from 3'-phosphoadenosine 5'-phosphosulfate (PAPS) to position 6 of the N-sulfoglucosamine residue (GlcNS) of heparan sulfate. The polypeptide is Heparan-sulfate 6-O-sulfotransferase 2 (Homo sapiens (Human)).